The chain runs to 312 residues: NAD(P)(+)--arginine ADP-ribosyltransferase 1 (312 aa).

An N-terminal signal peptide occupies residues Met-1 to Ala-20. Positions Ala-21–Gly-31 are excised as a propeptide. Cystine bridges form between Cys-51/Cys-260 and Cys-159/Cys-208. The TR mART core domain occupies Ile-71 to Ser-256. Residues Tyr-108, Arg-164, and Gln-183 each contribute to the NAD(+) site. Arg-164 is a catalytic residue. Ser-186 is a catalytic residue. Residue Ser-217 coordinates NAD(+). Glu-224 is an active-site residue. Residues Gly-267–Val-312 constitute a propeptide that is removed on maturation.

It belongs to the Arg-specific ADP-ribosyltransferase family.

The protein localises to the secreted. It localises to the extracellular space. The catalysed reaction is L-arginyl-[protein] + NAD(+) = N(omega)-(ADP-D-ribosyl)-L-arginyl-[protein] + nicotinamide + H(+). The sequence is that of NAD(P)(+)--arginine ADP-ribosyltransferase 1 from Gallus gallus (Chicken).